The primary structure comprises 969 residues: RNA polymerase-associated protein RapA (969 aa).

Residues 164-334 (EVGRRHAPRV…FARLRLLDSD (171 aa)) form the Helicase ATP-binding domain. 177 to 184 (DEVGLGKT) contributes to the ATP binding site. The short motif at 280–283 (DEAH) is the DEAH box element. The region spanning 492 to 668 (RVNWLLEKLK…GSNEALDDVI (177 aa)) is the Helicase C-terminal domain.

It belongs to the SNF2/RAD54 helicase family. RapA subfamily. In terms of assembly, interacts with the RNAP. Has a higher affinity for the core RNAP than for the holoenzyme. Its ATPase activity is stimulated by binding to RNAP.

Functionally, transcription regulator that activates transcription by stimulating RNA polymerase (RNAP) recycling in case of stress conditions such as supercoiled DNA or high salt concentrations. Probably acts by releasing the RNAP, when it is trapped or immobilized on tightly supercoiled DNA. Does not activate transcription on linear DNA. Probably not involved in DNA repair. In Vibrio vulnificus (strain CMCP6), this protein is RNA polymerase-associated protein RapA.